A 1161-amino-acid chain; its full sequence is Perforin-like protein 1 (1161 aa).

A helical membrane pass occupies residues 67–86 (LWITFVCLLTLHMFGLSSAV). The disordered stretch occupies residues 154–329 (PEALNEVPTK…LGDSSALDLF (176 aa)). Composition is skewed to basic and acidic residues over residues 162-177 (TKVERNEFTEKGDKTE) and 184-194 (ADHKSLLEGRS). The span at 201 to 211 (PDDDFDFLFED) shows a compositional bias: acidic residues. The span at 222 to 234 (NKGTSSDETSPGD) shows a compositional bias: polar residues. Residues 238–249 (GEGSSASDSLLS) show a composition bias toward low complexity. An N-linked (GlcNAc...) asparagine glycan is attached at Asn257. Residues 264-283 (NQKRITHPKSKAQHQKKVTK) are compositionally biased toward basic residues. Over residues 309-322 (NTQADDSQRQSLGD) the composition is skewed to polar residues. Asn344 carries N-linked (GlcNAc...) asparagine glycosylation. Residues 353–381 (AANDGGLFSSSGMGPTGASDETSANPLGS) are disordered. Residues 361–378 (SSSGMGPTGASDETSANP) show a composition bias toward polar residues. An MACPF domain is found at 463-817 (LSAVYTKATK…LTPQDLSALT (355 aa)). Cysteines 539 and 602 form a disulfide. A glycan (N-linked (GlcNAc...) asparagine) is linked at Asn550. The chain crosses the membrane as a beta stranded span at residues 554-589 (YQNELSVDASLQGGDPIGLNSFSASTGYRDFAKEVS). The N-linked (GlcNAc...) asparagine glycan is linked to Asn618. Cys643 and Cys657 are oxidised to a cystine. The chain crosses the membrane as a beta stranded span at residues 694–740 (RSEVEKMRNMGIDVKTQLKMQLGGVSGGAGQGTSSKKNQSSSEYQMN). A disordered region spans residues 716–736 (GGVSGGAGQGTSSKKNQSSSE). Asn755 carries N-linked (GlcNAc...) asparagine glycosylation. Intrachain disulfides connect Cys845-Cys900, Cys874-Cys881, Cys928-Cys981, Cys957-Cys964, Cys1019-Cys1080, and Cys1047-Cys1054. Asn1022, Asn1050, and Asn1111 each carry an N-linked (GlcNAc...) asparagine glycan. The interval 1094-1149 (VGKAKGNGKKKKGKKGKNKTNAPNEVEEGQQLGADSPSQVSVPADADSGPTSKTMS) is disordered. Positions 1099–1111 (GNGKKKKGKKGKN) are enriched in basic residues.

Belongs to the MPEG1 family. In terms of assembly, homooligomer; forms a homooligomeric pore.

Its subcellular location is the parasitophorous vacuole membrane. It localises to the cytoplasmic vesicle. The protein localises to the secretory vesicle. The protein resides in the microneme membrane. Its function is as follows. Pore-forming protein that promotes parasite exit from host cells: mediates formation of a pore in the parasitophorous vacuolar membrane, leading to membrane permeabilization, thereby facilitating parasite egress from host cells. May also form a pore in the host plasma membrane. Preferentially binds inner leaflet lipids, such as phosphatidylethanolamine (PE) or phosphatidylserine (PS). This chain is Perforin-like protein 1, found in Toxoplasma gondii (strain ATCC 50861 / VEG).